A 335-amino-acid polypeptide reads, in one-letter code: 7,8-didemethyl-8-hydroxy-5-deazariboflavin synthase (335 aa).

One can recognise a Radical SAM core domain in the interval 1-246 (MTYSKNVFIP…QVAPNLIDPK (246 aa)). Cys15, Cys19, and Cys22 together coordinate [4Fe-4S] cluster.

The protein belongs to the radical SAM superfamily. CofG family. In terms of assembly, consists of two subunits, CofG and CofH. It depends on [4Fe-4S] cluster as a cofactor.

The enzyme catalyses 5-amino-5-(4-hydroxybenzyl)-6-(D-ribitylimino)-5,6-dihydrouracil + S-adenosyl-L-methionine = 7,8-didemethyl-8-hydroxy-5-deazariboflavin + 5'-deoxyadenosine + L-methionine + NH4(+) + H(+). The protein operates within cofactor biosynthesis; coenzyme F0 biosynthesis. Catalyzes the radical-mediated synthesis of 7,8-didemethyl-8-hydroxy-5-deazariboflavin from 5-amino-5-(4-hydroxybenzyl)-6-(D-ribitylimino)-5,6-dihydrouracil. This Methanosarcina mazei (strain ATCC BAA-159 / DSM 3647 / Goe1 / Go1 / JCM 11833 / OCM 88) (Methanosarcina frisia) protein is 7,8-didemethyl-8-hydroxy-5-deazariboflavin synthase.